A 697-amino-acid chain; its full sequence is Putative ATP-dependent RNA helicase an3 (697 aa).

Residues 27–189 (ESGVAGTKGR…PLAPNDRVEQ (163 aa)) form a disordered region. 3 stretches are compositionally biased toward basic and acidic residues: residues 89–111 (GRSDRGFYDRENSGWNSGRDKDA), 135–144 (RRTDDRRQDG), and 151–170 (RSDKSGFGRFDRGNSRWSDD). The short motif at 221-249 (ESFHDVTMGEIIMGNIQLTRYTRPTPVQK) is the Q motif element. ATP-binding positions include 241 to 248 (YTRPTPVQ) and 265 to 272 (AQTGSGKT). A Helicase ATP-binding domain is found at 252–444 (IPIIIEKRDL…RDFLDEYIFL (193 aa)). The DEAD box signature appears at 388 to 391 (DEAD). The Helicase C-terminal domain maps to 455 to 616 (NITQKVVWVE…EVPSWLENMA (162 aa)). Residues 619-666 (QHHKSSSRGRSKSRFSGGFGAKDYRQSSGAGSSFGSSRGGRSSGHGGS) form a disordered region. Basic residues predominate over residues 622 to 631 (KSSSRGRSKS). Residues 645–654 (SSGAGSSFGS) are compositionally biased toward low complexity. Positions 655-666 (SRGGRSSGHGGS) are enriched in gly residues.

The protein belongs to the DEAD box helicase family. DDX3/DED1 subfamily.

The protein localises to the cell membrane. The protein resides in the nucleus. Its subcellular location is the cytoplasm. It localises to the stress granule. It is found in the inflammasome. The protein localises to the cell projection. The protein resides in the lamellipodium. It catalyses the reaction ATP + H2O = ADP + phosphate + H(+). Functionally, multifunctional ATP-dependent RNA helicase. The ATPase activity can be stimulated by various ribo-and deoxynucleic acids indicative for a relaxed substrate specificity. In vitro can unwind partially double-stranded DNA with a preference for 5'-single-stranded DNA overhangs. Involved in many cellular processes, which do not necessarily require its ATPase/helicase catalytic activities. Involved in the regulation of transcription and translation initiation. Involved in innate immunity. Involved in both stress and inflammatory responses. May negatively regulate extrinsic apoptotic signaling pathway via death domain receptors. May be involved in mitotic chromosome segregation. Required for canonical Wnt signaling involved in anteroposterior neural patterning. The sequence is that of Putative ATP-dependent RNA helicase an3 (an3) from Xenopus laevis (African clawed frog).